Here is a 112-residue protein sequence, read N- to C-terminus: Truncated ankyrin repeat protein B25 (112 aa).

Belongs to the orthopoxviruses B25 protein family.

The polypeptide is Truncated ankyrin repeat protein B25 (Bos taurus (Bovine)).